Here is a 670-residue protein sequence, read N- to C-terminus: Transketolase, plasmid (670 aa).

H32 provides a ligand contact to substrate. Thiamine diphosphate-binding positions include H72 and G120 to L122. D161 is a Mg(2+) binding site. Residues G162 and N191 each coordinate thiamine diphosphate. Mg(2+)-binding residues include N191 and I193. Substrate-binding residues include H267, R364, and S391. Position 267 (H267) interacts with thiamine diphosphate. The active-site Proton donor is E417. A thiamine diphosphate-binding site is contributed by F443. Residues H467, D475, and R526 each contribute to the substrate site.

This sequence belongs to the transketolase family. As to quaternary structure, homodimer. Mg(2+) serves as cofactor. Ca(2+) is required as a cofactor. The cofactor is Mn(2+). It depends on Co(2+) as a cofactor. Requires thiamine diphosphate as cofactor.

It catalyses the reaction D-sedoheptulose 7-phosphate + D-glyceraldehyde 3-phosphate = aldehydo-D-ribose 5-phosphate + D-xylulose 5-phosphate. It participates in carbohydrate biosynthesis; Calvin cycle. In terms of biological role, catalyzes the transfer of a two-carbon ketol group from a ketose donor to an aldose acceptor, via a covalent intermediate with the cofactor thiamine pyrophosphate. The polypeptide is Transketolase, plasmid (cbbTP) (Cupriavidus necator (strain ATCC 17699 / DSM 428 / KCTC 22496 / NCIMB 10442 / H16 / Stanier 337) (Ralstonia eutropha)).